The chain runs to 807 residues: uncharacterized protein (807 aa).

Residues methionine 1 to glycine 18 form the signal peptide. At leucine 19 to glutamate 704 the chain is on the extracellular side. Residues threonine 133–glycine 142 show a composition bias toward polar residues. The interval threonine 133 to aspartate 171 is disordered. N-linked (GlcNAc...) asparagine; by host glycans are attached at residues asparagine 277 and asparagine 660. The chain crosses the membrane as a helical span at residues valine 705–isoleucine 725. The Cytoplasmic portion of the chain corresponds to serine 726–asparagine 807.

It is found in the host membrane. This is an uncharacterized protein from Magallana gigas (Pacific oyster).